Here is a 332-residue protein sequence, read N- to C-terminus: Protein FAM131B (332 aa).

The segment at 1 to 22 (MDSTSSLHGSSLHRPSTEQTRT) is disordered. Ser47 bears the Phosphoserine mark. The segment at 95-114 (PTIQPQHSHEAVRRDTDAYS) is disordered. Positions 101–111 (HSHEAVRRDTD) are enriched in basic and acidic residues. Ser114 and Ser117 each carry phosphoserine. The interval 221 to 332 (LGPAFDDSQP…FDEEEGDANN (112 aa)) is disordered. Composition is skewed to basic and acidic residues over residues 272 to 281 (PVEEEKRPLA) and 288 to 302 (AGCRDLESLSPREDP). A phosphoserine mark is found at Ser295, Ser297, and Ser313. Thr316 carries the phosphothreonine modification. Ser317, Ser318, and Ser322 each carry phosphoserine. A compositionally biased stretch (acidic residues) spans 323 to 332 (FDEEEGDANN).

It belongs to the FAM131 family.

The protein is Protein FAM131B (Fam131b) of Mus musculus (Mouse).